A 2890-amino-acid chain; its full sequence is Bifunctional DNA-directed RNA polymerase subunit beta-beta' (2890 aa).

The interval 1–1377 (MSKKIPLKNR…DINIFGDDVD (1377 aa)) is DNA-directed RNA polymerase subunit beta. Positions 1384–2890 (PIMIKEDDRP…LRALEDNSKF (1507 aa)) are DNA-directed RNA polymerase subunit beta'. Zn(2+) is bound by residues C1449, C1451, C1465, and C1468. Mg(2+) is bound by residues D1849, D1851, and D1853. Zn(2+) is bound by residues C2179, C2253, C2260, and C2263.

The protein in the N-terminal section; belongs to the RNA polymerase beta chain family. This sequence in the C-terminal section; belongs to the RNA polymerase beta' chain family. In terms of assembly, the RNAP catalytic core consists of 2 alpha, 1 beta/beta' and 1 omega subunit. When a sigma factor is associated with the core the holoenzyme is formed, which can initiate transcription. Mg(2+) serves as cofactor. It depends on Zn(2+) as a cofactor.

The enzyme catalyses RNA(n) + a ribonucleoside 5'-triphosphate = RNA(n+1) + diphosphate. Functionally, DNA-dependent RNA polymerase catalyzes the transcription of DNA into RNA using the four ribonucleoside triphosphates as substrates. This Helicobacter pylori (strain J99 / ATCC 700824) (Campylobacter pylori J99) protein is Bifunctional DNA-directed RNA polymerase subunit beta-beta' (rpoBC).